Reading from the N-terminus, the 143-residue chain is Regulator of ribonuclease activity B (143 aa).

Acidic residues predominate over residues 117–135 (DPDAEYDDEDGENEDDESE). The segment at 117 to 143 (DPDAEYDDEDGENEDDESESDKSSRLH) is disordered.

The protein belongs to the RraB family. As to quaternary structure, interacts with the C-terminal region of Rne.

The protein resides in the cytoplasm. Functionally, globally modulates RNA abundance by binding to RNase E (Rne) and regulating its endonucleolytic activity. Can modulate Rne action in a substrate-dependent manner by altering the composition of the degradosome. This chain is Regulator of ribonuclease activity B, found in Proteus mirabilis (strain HI4320).